A 353-amino-acid chain; its full sequence is Ion-translocating oxidoreductase complex subunit D (353 aa).

Helical transmembrane passes span 20–40 (IMLL…YYFG), 44–64 (IIQV…ILHL), 77–108 (SALL…AIII), and 123–143 (PAMV…TSWL). Thr187 is modified (FMN phosphoryl threonine). 4 helical membrane passes run 214–234 (VIAG…GVFL), 242–262 (WHIP…GWLL), 267–287 (LVTP…FFIA), and 301–318 (LLYG…RSYG).

This sequence belongs to the NqrB/RnfD family. The complex is composed of six subunits: RnfA, RnfB, RnfC, RnfD, RnfE and RnfG. FMN serves as cofactor.

The protein resides in the cell inner membrane. Functionally, part of a membrane-bound complex that couples electron transfer with translocation of ions across the membrane. This Erwinia tasmaniensis (strain DSM 17950 / CFBP 7177 / CIP 109463 / NCPPB 4357 / Et1/99) protein is Ion-translocating oxidoreductase complex subunit D.